The sequence spans 43 residues: Protein PsbN (43 aa).

A helical transmembrane segment spans residues 5 to 27 (TLFAISISCLLVSFTGYALYTAF).

Belongs to the PsbN family.

Its subcellular location is the plastid. The protein localises to the chloroplast thylakoid membrane. In terms of biological role, may play a role in photosystem I and II biogenesis. In Thuja plicata (Western red-cedar), this protein is Protein PsbN.